A 442-amino-acid chain; its full sequence is ATP-dependent protease ATPase subunit HslU (442 aa).

Residues isoleucine 18 and 60-65 each bind ATP; that span reads GVGKTE. The interval 136-156 is disordered; sequence LPKPKNDWDSTDSDANSNTRQ. 3 residues coordinate ATP: aspartate 255, glutamate 320, and arginine 392.

This sequence belongs to the ClpX chaperone family. HslU subfamily. In terms of assembly, a double ring-shaped homohexamer of HslV is capped on each side by a ring-shaped HslU homohexamer. The assembly of the HslU/HslV complex is dependent on binding of ATP.

The protein resides in the cytoplasm. ATPase subunit of a proteasome-like degradation complex; this subunit has chaperone activity. The binding of ATP and its subsequent hydrolysis by HslU are essential for unfolding of protein substrates subsequently hydrolyzed by HslV. HslU recognizes the N-terminal part of its protein substrates and unfolds these before they are guided to HslV for hydrolysis. The polypeptide is ATP-dependent protease ATPase subunit HslU (Shewanella sp. (strain MR-7)).